Consider the following 116-residue polypeptide: Large ribosomal subunit protein bL19 (116 aa).

Belongs to the bacterial ribosomal protein bL19 family.

In terms of biological role, this protein is located at the 30S-50S ribosomal subunit interface and may play a role in the structure and function of the aminoacyl-tRNA binding site. The sequence is that of Large ribosomal subunit protein bL19 from Staphylococcus saprophyticus subsp. saprophyticus (strain ATCC 15305 / DSM 20229 / NCIMB 8711 / NCTC 7292 / S-41).